Reading from the N-terminus, the 217-residue chain is GTP-binding protein yptV2 (217 aa).

Residue 20 to 27 coordinates GTP; the sequence is GDSGVGKS. An Effector region motif is present at residues 42–50; the sequence is FITTIGIDF. Residues 68–72 and 126–129 contribute to the GTP site; these read DTAGQ and NKLD. A disordered region spans residues 198-217; that stretch reads QPVRLTSGSPSPAQGKSCCR. Residues 201–211 show a composition bias toward polar residues; it reads RLTSGSPSPAQ. S-geranylgeranyl cysteine attachment occurs at residues C215 and C216.

This sequence belongs to the small GTPase superfamily. Rab family.

Its subcellular location is the cell membrane. Functionally, protein transport. Probably involved in vesicular traffic. This Volvox carteri (Green alga) protein is GTP-binding protein yptV2 (YPTV2).